The chain runs to 1481 residues: Cystic fibrosis transmembrane conductance regulator (1481 aa).

Topologically, residues M1–F77 are cytoplasmic. A helical transmembrane segment spans residues F78–Q98. The 285-residue stretch at F81 to L365 folds into the ABC transmembrane type-1 1 domain. The Extracellular portion of the chain corresponds to P99–Y122. A helical membrane pass occupies residues L123 to H146. The Cytoplasmic segment spans residues H147–L195. Residues A196 to W216 traverse the membrane as a helical segment. Residues E217–S222 lie on the Extracellular side of the membrane. A helical membrane pass occupies residues A223 to M243. Over M244–K298 the chain is Cytoplasmic. The helical transmembrane segment at A299 to F319 threads the bilayer. The Extracellular segment spans residues L320–T339. Residues I340–V358 traverse the membrane as a helical segment. The Cytoplasmic portion of the chain corresponds to Q359–S858. ATP is bound by residues W401, G458–T465, and Q493. Positions N423 to G646 constitute an ABC transporter 1 domain. A lipid anchor (S-palmitoyl cysteine) is attached at C524. 2 positions are modified to phosphoserine: S549 and S660. Positions S654 to E831 are disordered R region. S670 carries the phosphoserine; by PKA modification. S686 is subject to Phosphoserine. A Glycyl lysine isopeptide (Lys-Gly) (interchain with G-Cter in ubiquitin) cross-link involves residue K688. Phosphoserine occurs at positions 700 and 712. A Phosphothreonine modification is found at T717. Phosphoserine occurs at positions 737, 768, 790, 795, and 813. A helical transmembrane segment spans residues L859–V879. An ABC transmembrane type-1 2 domain is found at L859–S1155. At L880–I918 the chain is on the extracellular side. N894 and N900 each carry an N-linked (GlcNAc...) asparagine glycan. A discontinuously helical transmembrane segment spans residues Y919–H939. The Cytoplasmic portion of the chain corresponds to T940–T990. The helical transmembrane segment at I991–L1011 threads the bilayer. The Extracellular portion of the chain corresponds to Q1012 to P1013. Residues Y1014–L1034 form a helical membrane-spanning segment. Residues H1035–T1095 lie on the Cytoplasmic side of the membrane. The chain crosses the membrane as a helical span at residues L1096–F1116. At I1117–G1130 the chain is on the extracellular side. A helical membrane pass occupies residues I1131–I1151. At D1152 to L1481 the chain is on the cytoplasmic side. Residues M1211–P1444 enclose the ABC transporter 2 domain. ATP contacts are provided by residues Y1220 and G1245–S1252. The interval R1387 to L1481 is interaction with GORASP2. C1396 is lipidated: S-palmitoyl cysteine. Residues S1445 and S1457 each carry the phosphoserine modification. The tract at residues K1449–L1481 is disordered. The segment covering L1450 to R1462 has biased composition (basic residues). Over residues E1471 to L1481 the composition is skewed to acidic residues. Positions T1479–L1481 match the PDZ-binding motif.

It belongs to the ABC transporter superfamily. ABCC family. CFTR transporter (TC 3.A.1.202) subfamily. Monomer; does not require oligomerization for channel activity. May form oligomers in the membrane. Interacts with SLC26A3, SLC26A6 and NHERF1. Interacts with SHANK2. Interacts with MYO6. Interacts (via C-terminus) with GOPC (via PDZ domain); this promotes CFTR internalization and thereby decreases channel activity. Interacts with SLC4A7 through NHERF1. Found in a complex with MYO5B and RAB11A. Interacts with ANO1. Interacts with SLC26A8. Interacts with AHCYL1; the interaction increases CFTR activity. Interacts with CSE1L. The core-glycosylated form interacts with GORASP2 (via PDZ GRASP-type 1 domain) in respone to ER stress. Interacts with MARCHF2; the interaction leads to CFTR ubiqtuitination and degradation. Interacts with ADGRG2. Post-translationally, N-glycosylated. In terms of processing, phosphorylated; cAMP treatment promotes phosphorylation and activates the channel. Dephosphorylation decreases the ATPase activity (in vitro). Phosphorylation at PKA sites activates the channel. Phosphorylation at PKC sites enhances the response to phosphorylation by PKA. Phosphorylated by AMPK; this inhibits channel activity. Ubiquitinated, leading to its degradation in the lysosome. Deubiquitination by USP10 in early endosomes enhances its endocytic recycling to the cell membrane. Ubiquitinated by RNF185 during ER stress. Ubiquitinated by MARCHF2.

It localises to the apical cell membrane. The protein resides in the early endosome membrane. The protein localises to the cell membrane. It is found in the recycling endosome membrane. Its subcellular location is the endoplasmic reticulum membrane. It localises to the nucleus. It carries out the reaction ATP + H2O + closed Cl(-) channel = ADP + phosphate + open Cl(-) channel.. It catalyses the reaction chloride(in) = chloride(out). The enzyme catalyses hydrogencarbonate(in) = hydrogencarbonate(out). The catalysed reaction is ATP + H2O = ADP + phosphate + H(+). Its function is as follows. Epithelial ion channel that plays an important role in the regulation of epithelial ion and water transport and fluid homeostasis. Mediates the transport of chloride ions across the cell membrane. Possesses an intrinsic ATPase activity and utilizes ATP to gate its channel; the passive flow of anions through the channel is gated by cycles of ATP binding and hydrolysis by the ATP-binding domains. The ion channel is also permeable to HCO(3)(-); selectivity depends on the extracellular chloride concentration. Exerts its function also by modulating the activity of other ion channels and transporters. Contributes to the regulation of the pH and the ion content of the epithelial fluid layer. Modulates the activity of the epithelial sodium channel (ENaC) complex, in part by regulating the cell surface expression of the ENaC complex. May regulate bicarbonate secretion and salvage in epithelial cells by regulating the transporter SLC4A7. Can inhibit the chloride channel activity of ANO1. Plays a role in the chloride and bicarbonate homeostasis during sperm epididymal maturation and capacitation. The sequence is that of Cystic fibrosis transmembrane conductance regulator from Microcebus murinus (Gray mouse lemur).